Consider the following 226-residue polypeptide: Small ribosomal subunit protein uS3 (226 aa).

Residues 39–109 (IYKFFDKFTR…KLDVNLKVLT (71 aa)) form the KH type-2 domain.

The protein belongs to the universal ribosomal protein uS3 family. In terms of assembly, part of the 30S ribosomal subunit. Forms a tight complex with proteins S10 and S14.

Binds the lower part of the 30S subunit head. Binds mRNA in the 70S ribosome, positioning it for translation. The sequence is that of Small ribosomal subunit protein uS3 from Mycoplasmopsis synoviae (strain 53) (Mycoplasma synoviae).